We begin with the raw amino-acid sequence, 81 residues long: Apolipoprotein C-I, acidic form (81 aa).

Residues 1–24 (MRLFLSLLVVVLSMVLKGPTPAQG) form the signal peptide.

It belongs to the apolipoprotein C1 family.

Its subcellular location is the secreted. The sequence is that of Apolipoprotein C-I, acidic form (APOC1A) from Macaca fascicularis (Crab-eating macaque).